We begin with the raw amino-acid sequence, 81 residues long: MNDIYTQAQHQLDALGLRCPEPVMMIRKTVRKMAEGETLLVIADDPATTRDIPSFCEFMDHTLIASDISKTPYHYLLKKGL.

The active-site Cysteine persulfide intermediate is C19.

It belongs to the sulfur carrier protein TusA family.

It localises to the cytoplasm. Its function is as follows. Sulfur carrier protein which probably makes part of a sulfur-relay system. The sequence is that of Sulfur carrier protein TusA from Shewanella frigidimarina (strain NCIMB 400).